Reading from the N-terminus, the 145-residue chain is Trafficking protein particle complex subunit 1 (145 aa).

It belongs to the TRAPP small subunits family. BET5 subfamily. In terms of assembly, part of the multisubunit transport protein particle (TRAPP) complex. The heterodimer TRAPPC6B-TRAPPC3 interacts with TRAPPC1 likely providing a core for TRAPP complex formation.

It is found in the golgi apparatus. The protein localises to the cis-Golgi network. Its subcellular location is the endoplasmic reticulum. May play a role in vesicular transport from endoplasmic reticulum to Golgi. This chain is Trafficking protein particle complex subunit 1 (TRAPPC1), found in Bos taurus (Bovine).